The following is a 345-amino-acid chain: D-fructose 1,6-bisphosphatase class 2/sedoheptulose 1,7-bisphosphatase (345 aa).

Mn(2+) contacts are provided by D33, E57, D97, and E100. Residues 100-102, Y131, 176-178, and 198-200 contribute to the substrate site; these read EGT, RDR, and DGD. E225 is a Mn(2+) binding site.

Belongs to the FBPase class 2 family. Homotetramer. Mn(2+) is required as a cofactor.

It carries out the reaction beta-D-fructose 1,6-bisphosphate + H2O = beta-D-fructose 6-phosphate + phosphate. It catalyses the reaction D-sedoheptulose 1,7-bisphosphate + H2O = D-sedoheptulose 7-phosphate + phosphate. The protein operates within carbohydrate biosynthesis; Calvin cycle. Its function is as follows. Catalyzes the hydrolysis of fructose 1,6-bisphosphate (Fru 1,6-P2) and sedoheptulose 1,7-bisphosphate (Sed 1,7-P2) to fructose 6-phosphate and sedoheptulose 7-phosphate, respectively. In Nostoc sp. (strain PCC 7120 / SAG 25.82 / UTEX 2576), this protein is D-fructose 1,6-bisphosphatase class 2/sedoheptulose 1,7-bisphosphatase.